Here is a 442-residue protein sequence, read N- to C-terminus: tRNA modification GTPase MnmE (442 aa).

Positions 22, 79, and 119 each coordinate (6S)-5-formyl-5,6,7,8-tetrahydrofolate. The TrmE-type G domain maps to glycine 216–alanine 366. Asparagine 226 is a K(+) binding site. Residues asparagine 226–serine 231, serine 245–threonine 251, and aspartate 270–glycine 273 contribute to the GTP site. Serine 230 provides a ligand contact to Mg(2+). Positions 245, 247, and 250 each coordinate K(+). A Mg(2+)-binding site is contributed by threonine 251. Lysine 442 lines the (6S)-5-formyl-5,6,7,8-tetrahydrofolate pocket.

This sequence belongs to the TRAFAC class TrmE-Era-EngA-EngB-Septin-like GTPase superfamily. TrmE GTPase family. As to quaternary structure, homodimer. Heterotetramer of two MnmE and two MnmG subunits. The cofactor is K(+).

Its subcellular location is the cytoplasm. Functionally, exhibits a very high intrinsic GTPase hydrolysis rate. Involved in the addition of a carboxymethylaminomethyl (cmnm) group at the wobble position (U34) of certain tRNAs, forming tRNA-cmnm(5)s(2)U34. The polypeptide is tRNA modification GTPase MnmE (Mesomycoplasma hyopneumoniae (strain 232) (Mycoplasma hyopneumoniae)).